A 39-amino-acid chain; its full sequence is Photosystem II reaction center protein L (39 aa).

The helical transmembrane segment at 18–38 threads the bilayer; that stretch reads SLYLGLLVVFTTGILFSSYFF.

The protein belongs to the PsbL family. In terms of assembly, PSII is composed of 1 copy each of membrane proteins PsbA, PsbB, PsbC, PsbD, PsbE, PsbF, PsbH, PsbI, PsbJ, PsbK, PsbL, PsbM, PsbT, PsbX, PsbY, PsbZ, Psb30/Ycf12, peripheral proteins PsbO, CyanoQ (PsbQ), PsbU, PsbV and a large number of cofactors. It forms dimeric complexes.

The protein resides in the cellular thylakoid membrane. Its function is as follows. One of the components of the core complex of photosystem II (PSII). PSII is a light-driven water:plastoquinone oxidoreductase that uses light energy to abstract electrons from H(2)O, generating O(2) and a proton gradient subsequently used for ATP formation. It consists of a core antenna complex that captures photons, and an electron transfer chain that converts photonic excitation into a charge separation. This subunit is found at the monomer-monomer interface and is required for correct PSII assembly and/or dimerization. The polypeptide is Photosystem II reaction center protein L (Synechococcus sp. (strain WH7803)).